The sequence spans 359 residues: Ferredoxin--NADP reductase (359 aa).

Asp48, Gln56, Tyr61, Ala101, Phe139, Asp304, and Ser345 together coordinate FAD. The segment at 340 to 359 (VHTHTSNDTNLQSRLHAAAE) is disordered. The segment covering 341–352 (HTHTSNDTNLQS) has biased composition (polar residues).

The protein belongs to the ferredoxin--NADP reductase type 2 family. Homodimer. It depends on FAD as a cofactor.

The catalysed reaction is 2 reduced [2Fe-2S]-[ferredoxin] + NADP(+) + H(+) = 2 oxidized [2Fe-2S]-[ferredoxin] + NADPH. The polypeptide is Ferredoxin--NADP reductase (Ralstonia nicotianae (strain ATCC BAA-1114 / GMI1000) (Ralstonia solanacearum)).